A 474-amino-acid chain; its full sequence is Protein U79/U80 (474 aa).

Composition is skewed to basic and acidic residues over residues 156-165 (DRKKHDDEHR) and 175-219 (RKVE…KRQK). 2 disordered regions span residues 156–219 (DRKK…KRQK) and 412–441 (SGQNRGRARGRGRGRAPRRRNSNINNSRTQ). Positions 417-432 (GRARGRGRGRAPRRRN) are enriched in basic residues.

This sequence belongs to the herpesviridae U79/UL112 family.

The protein localises to the host nucleus. May be involved in DNA replication. The protein is Protein U79/U80 (U79/U80) of Homo sapiens (Human).